We begin with the raw amino-acid sequence, 424 residues long: Adenylosuccinate synthetase (424 aa).

GTP contacts are provided by residues 12-18 (GDEGKGK) and 40-42 (GHT). D13 functions as the Proton acceptor in the catalytic mechanism. Mg(2+) contacts are provided by D13 and G40. IMP is bound by residues 13–16 (DEGK), 38–41 (NAGH), T130, R144, N220, T235, and R299. H41 (proton donor) is an active-site residue. Residue 295–301 (VTTGRRR) participates in substrate binding. Residues R301, 327 to 329 (KLD), and 412 to 414 (GTG) contribute to the GTP site.

This sequence belongs to the adenylosuccinate synthetase family. As to quaternary structure, homodimer. Mg(2+) is required as a cofactor.

The protein resides in the cytoplasm. The catalysed reaction is IMP + L-aspartate + GTP = N(6)-(1,2-dicarboxyethyl)-AMP + GDP + phosphate + 2 H(+). Its pathway is purine metabolism; AMP biosynthesis via de novo pathway; AMP from IMP: step 1/2. Plays an important role in the de novo pathway and in the salvage pathway of purine nucleotide biosynthesis. Catalyzes the first committed step in the biosynthesis of AMP from IMP. This chain is Adenylosuccinate synthetase, found in Aspergillus niger (strain ATCC MYA-4892 / CBS 513.88 / FGSC A1513).